The chain runs to 1026 residues: MRFFALFIYRPVATILIAAAITLCGILGFRLLPVAPLPQVDFPVIMVSASLPGASPETMASSVATPLERSLGRIAGVNEMTSSSSLGSTRIILEFNFDRDINGAARDVQAAINAAQSLLPGGMPSRPTYRKANPSDAPIMILTLTSESWSQGKLYDFASTQLAQTIAQIDGVGDVDVGGSSLPAVRVGLNPQALFNQGVSLDEVREAIDSANVRRPQGAIEDSVHRWQIQTNDELKTAAEYQPLIIHYNNGAAVRLGDVASVTDSVQDVRNAGMTNAKPAILLMIRKLPEANIIQTVDGIRAKLPELRAMIPAAIDLQIAQDRSPTIRASLQEVEETLAISVALVILVVFLFLRSGRATLIPAVAVPVSLIGTFAAMYLCGFSLNNLSLMALTIATGFVVDDAIVVLENIARHLEAGMKPLQAALQGTREVGFTVISMSLSLVAVFLPLLLMGGLPGRLLREFAVTLSVAIGISLVVSLTLTPMMCGWMLKSSKPRTQPRKRGVGRLLVALQQGYGTSLKWVLNHTRLVGVVFLGTVALNIWLYIAIPKTFFPEQDTGVLMGGIQADQSISFQAMRGKLQDFMKIIRDDPAVNNVTGFTGGSRVNSGMMFITLKPRGERKETAQQIIDRLRVKQAKEPGARLFLMAVQDIRVGGRQANASYQYTLLSDSLAALREWEPKIRKALSALPQLADVNSDQQDNGAEMNLIYDRDTMSRLGIDVQAANSLLNNAFGQRQISTIYQPMNQYKVVMEVDPRYSQDISALEKMFVINRDGKAIPLSYFAQWRPANAPLSVNHQGLSAASTIAFNLPTGTSLSQATEAINRTMTQLGVPSTVRGSFSGTAQVFQQTMNSQLILIVAAIATVYIVLGILYESYVHPLTILSTLPSAGVGALLALELFNAPFSLIALIGIMLLIGIVKKNAIMMVDFALEAQRSGGLTPEQAIFQACLLRFRPIMMTTLAALFGALPLVLSGGDGSELRQPLGITIVGGLVMSQLLTLYTTPVVYLFFDRLRLRFSRKNSKPVVEI.

The next 11 membrane-spanning stretches (helical) occupy residues 15 to 35 (ILIAAAITLCGILGFRLLPVA), 333 to 353 (EVEETLAISVALVILVVFLFL), 360 to 380 (LIPAVAVPVSLIGTFAAMYLC), 387 to 407 (LSLMALTIATGFVVDDAIVVL), 431 to 451 (VGFTVISMSLSLVAVFLPLLL), 463 to 483 (FAVTLSVAIGISLVVSLTLTP), 528 to 548 (LVGVVFLGTVALNIWLYIAIP), 853 to 873 (LILIVAAIATVYIVLGILYES), 897 to 917 (LFNAPFSLIALIGIMLLIGIV), 953 to 973 (PIMMTTLAALFGALPLVLSGG), and 984 to 1004 (ITIVGGLVMSQLLTLYTTPVV).

The protein belongs to the resistance-nodulation-cell division (RND) (TC 2.A.6) family. MdtC subfamily. In terms of assembly, part of a tripartite efflux system composed of MdtA, MdtB and MdtC. MdtC forms a heteromultimer with MdtB.

The protein resides in the cell inner membrane. The protein is Multidrug resistance protein MdtC of Salmonella dublin (strain CT_02021853).